The primary structure comprises 261 residues: Histone H1-I (261 aa).

Positions 1–22 (MSETEAAPVVAPAAEAAPAAEA) are enriched in low complexity. Disordered stretches follow at residues 1–63 (MSET…PPYI) and 125–261 (FKLS…KGKK). The span at 41-50 (APKEPKAPKE) shows a compositional bias: basic and acidic residues. The region spanning 58 to 129 (THPPYIEMVK…KVKGSFKLSE (72 aa)) is the H15 domain. The span at 133–142 (AKAKKSTPKK) shows a compositional bias: basic residues. A run of 2 repeats spans residues 136–140 (KKSTP) and 188–192 (KKATP). The tract at residues 136–250 (KKSTPKKAKA…KKAPAKKSTP (115 aa)) is 7 X 5 AA repeats of K-K-[AS]-T-P. A DNA-binding region spans residues 139 to 142 (TPKK). Positions 143–198 (AKADGEAKPKKSEAKPKKAEAVKKTKAPKEKVERPKKEKKEKVEKKKATPKAEKPK) are enriched in basic and acidic residues. One copy of the 3; approximate repeat lies at 199-203 (KAATP). 4 tandem repeats follow at residues 209 to 213 (KKATP), 230 to 234 (KKATP), 236 to 240 (KKAAP), and 246 to 250 (KKSTP). Residues 227–250 (AKPKKATPSKKAAPKKAPAKKSTP) show a composition bias toward basic residues. Over residues 251–261 (KAKEAKSKGKK) the composition is skewed to basic and acidic residues.

This sequence belongs to the histone H1/H5 family.

Its subcellular location is the nucleus. The protein resides in the chromosome. In terms of biological role, histones H1 are necessary for the condensation of nucleosome chains into higher-order structures. The chain is Histone H1-I (H1-I) from Volvox carteri (Green alga).